The following is a 643-amino-acid chain: Threonine--tRNA ligase (643 aa).

One can recognise a TGS domain in the interval 1–61; the sequence is MPIITLPDGS…SEDSSLEIIT (61 aa). The interval 243–534 is catalytic; that stretch reads DHRRIGKALD…ITEEYAGFFP (292 aa). Residues C334, H385, and H511 each coordinate Zn(2+).

This sequence belongs to the class-II aminoacyl-tRNA synthetase family. Homodimer. Requires Zn(2+) as cofactor.

The protein localises to the cytoplasm. It catalyses the reaction tRNA(Thr) + L-threonine + ATP = L-threonyl-tRNA(Thr) + AMP + diphosphate + H(+). Functionally, catalyzes the attachment of threonine to tRNA(Thr) in a two-step reaction: L-threonine is first activated by ATP to form Thr-AMP and then transferred to the acceptor end of tRNA(Thr). Also edits incorrectly charged L-seryl-tRNA(Thr). The chain is Threonine--tRNA ligase from Actinobacillus pleuropneumoniae serotype 7 (strain AP76).